We begin with the raw amino-acid sequence, 341 residues long: Alpha-ketoglutarate-dependent dioxygenase oryG (341 aa).

Position 100 (histidine 100) interacts with substrate. 2 residues coordinate Fe cation: histidine 140 and aspartate 142. Threonine 167 lines the 2-oxoglutarate pocket. Residue histidine 299 participates in Fe cation binding. Residues arginine 311 and arginine 315 each contribute to the 2-oxoglutarate site. Arginine 315 is a binding site for substrate.

Belongs to the TfdA dioxygenase family. The cofactor is Fe(2+).

It functions in the pathway secondary metabolite biosynthesis. In terms of biological role, alpha-ketoglutarate-dependent dioxygenase; part of the gene cluster that mediates the biosynthesis of oryzines, natural products with an unusual maleidride backbone. The two subunits of the fungal fatty acid synthase oryfasA and oryfasB probably form octenoic acid. This fatty acid is most likely activated by the acyl-CoA ligase oryP to give octenyl-CoA before the citrate synthase-like protein oryE catalyzes condensation with oxaloacetate to form tricarboxylic acid. The next steps of the pathways are conjectural, but a favorite possible route has been proposed, beginning with decarboxylation and concomitant dehydration by the decarboxylase oryM, followed by tautomerization, which may lead to the production of a diene intermediate. Reduction of this diene intermediate could give the known metabolite piliformic acid. On the pathway to oryzine B and oryzine A, however, hydroxylation of the diene by the alpha-ketoglutarate-dependent dioxygenase oryG and lactonisation by the lactonohydrolases oryH or oryL could give oryzine B directly. Finally, enoyl reduction by the dehydrogenase oryD would then convert oryzine B into oryzine A. The protein is Alpha-ketoglutarate-dependent dioxygenase oryG of Aspergillus oryzae (strain ATCC 42149 / RIB 40) (Yellow koji mold).